Consider the following 375-residue polypeptide: Hemolysin BL-binding component (375 aa).

Positions 1 to 31 are cleaved as a signal peptide; it reads MIKKIPYKLLAVSTLLTITTANVVSPVATFA. A helical membrane pass occupies residues 232-252; sequence FNVMKGAILGLPIIGGIIVGV.

In terms of assembly, composed of a binding component, B, and two lytic components, L1 and L2. All three subunits act synergically to cause hemolysis.

Its subcellular location is the secreted. It localises to the host cell membrane. In terms of biological role, cytotoxic protein, part of the enterotoxin complex. Responsible for binding to erythrocytes. This enterotoxin is thought to be the cause of the diarrheal form of gastroenteritis caused by food-borne strains of B.cereus. The polypeptide is Hemolysin BL-binding component (hblA) (Bacillus cereus).